Reading from the N-terminus, the 273-residue chain is Dermonecrotic toxin LhSicTox-alphaIA2ai (273 aa).

The active site involves His5. Mg(2+) is bound by residues Glu25 and Asp27. The Nucleophile role is filled by His41. Cystine bridges form between Cys45-Cys51 and Cys47-Cys190. Asp85 is a binding site for Mg(2+).

Belongs to the arthropod phospholipase D family. Class II subfamily. Requires Mg(2+) as cofactor. In terms of tissue distribution, expressed by the venom gland.

It is found in the secreted. The catalysed reaction is an N-(acyl)-sphingosylphosphocholine = an N-(acyl)-sphingosyl-1,3-cyclic phosphate + choline. It carries out the reaction an N-(acyl)-sphingosylphosphoethanolamine = an N-(acyl)-sphingosyl-1,3-cyclic phosphate + ethanolamine. The enzyme catalyses a 1-acyl-sn-glycero-3-phosphocholine = a 1-acyl-sn-glycero-2,3-cyclic phosphate + choline. It catalyses the reaction a 1-acyl-sn-glycero-3-phosphoethanolamine = a 1-acyl-sn-glycero-2,3-cyclic phosphate + ethanolamine. Its function is as follows. Dermonecrotic toxins cleave the phosphodiester linkage between the phosphate and headgroup of certain phospholipids (sphingolipid and lysolipid substrates), forming an alcohol (often choline) and a cyclic phosphate. This toxin acts on sphingomyelin (SM). It may also act on ceramide phosphoethanolamine (CPE), lysophosphatidylcholine (LPC) and lysophosphatidylethanolamine (LPE), but not on lysophosphatidylserine (LPS), and lysophosphatidylglycerol (LPG). It acts by transphosphatidylation, releasing exclusively cyclic phosphate products as second products. Induces dermonecrosis, hemolysis, increased vascular permeability, edema, inflammatory response, and platelet aggregation. The protein is Dermonecrotic toxin LhSicTox-alphaIA2ai of Loxosceles hirsuta (Recluse spider).